A 45-amino-acid polypeptide reads, in one-letter code: Metallothionein-like protein 1A (45 aa).

Belongs to the metallothionein superfamily. Type 15 family. Expressed in phloem and mesophyll cells of leaves, vascular tissues of cotyledons, sepals and petals. Expressed in anthers. Expressed in root endodermis and at lower levels in cortex of mature region of roots.

Metallothioneins have a high content of cysteine residues that bind various heavy metals. Functions as a metal chelator of copper (Cu) and zinc (Zn). Plays a role in Cu homeostasis in the roots under elevated Cu concentration. Functions cooperatively with the phytochelatin synthase PCS1 to protect plants from Cu and cadmium (Cd) toxicity. Plays a role in Cu homeostasis, specifically in the remobilization of Cu from senescing leaves. The mobilization of Cu from internal sources is important for seed development. Confers tolerance to Cd and plays a role in Cd and Zn homeostasis. The protein is Metallothionein-like protein 1A (MT1A) of Arabidopsis thaliana (Mouse-ear cress).